The chain runs to 277 residues: Photosystem I assembly factor PSA3, chloroplastic (277 aa).

The N-terminal 45 residues, 1–45 (MVVVTHISTSFHQISPSFFHLRLRNPSTTSSSRPKLDGGFALSIR), are a transit peptide targeting the chloroplast.

In terms of assembly, interacts with PYG7.

It is found in the plastid. The protein localises to the chloroplast. The protein resides in the chloroplast thylakoid membrane. Its function is as follows. Nuclear genome-encoded factor required for the accumulation of photosystem I (PSI). Functions as a PSI biogenesis factor. Cooperates with PYG7 to promote the stable assembly of PSI in the thylakoid membrane. May target primarily the PsaC subunit. Does not seem to be required for the expression of chloroplast genes encoding PSI subunits. The polypeptide is Photosystem I assembly factor PSA3, chloroplastic (Arabidopsis thaliana (Mouse-ear cress)).